Consider the following 154-residue polypeptide: Myoglobin (154 aa).

One can recognise a Globin domain in the interval 2–148 (GLSDGEWQLV…FRNDIAAKYK (147 aa)). Ser4 carries the post-translational modification Phosphoserine. His65 is a binding site for nitrite. His65 contacts O2. Thr68 carries the phosphothreonine modification. Position 94 (His94) interacts with heme b.

Belongs to the globin family. Monomeric.

The protein resides in the cytoplasm. It is found in the sarcoplasm. The catalysed reaction is Fe(III)-heme b-[protein] + nitric oxide + H2O = Fe(II)-heme b-[protein] + nitrite + 2 H(+). It catalyses the reaction H2O2 + AH2 = A + 2 H2O. Its function is as follows. Monomeric heme protein which primary function is to store oxygen and facilitate its diffusion within muscle tissues. Reversibly binds oxygen through a pentacoordinated heme iron and enables its timely and efficient release as needed during periods of heightened demand. Depending on the oxidative conditions of tissues and cells, and in addition to its ability to bind oxygen, it also has a nitrite reductase activity whereby it regulates the production of bioactive nitric oxide. Under stress conditions, like hypoxia and anoxia, it also protects cells against reactive oxygen species thanks to its pseudoperoxidase activity. The polypeptide is Myoglobin (MB) (Ondatra zibethicus (Muskrat)).